Consider the following 188-residue polypeptide: Putative protein SSX9 (188 aa).

The KRAB-related domain occupies 20–83 (KIQKAFDDIA…TGATDLQGND (64 aa)). Residues 114 to 165 (KKPAEVGNDSKEVPEASGLQNDGKQLCPPGKPTTSEKINKASGPKRGKHAWT) form a disordered region. A compositionally biased stretch (basic and acidic residues) spans 115–127 (KPAEVGNDSKEVP). Serine 123 carries the post-translational modification Phosphoserine. The segment covering 156-165 (GPKRGKHAWT) has biased composition (basic residues).

Belongs to the SSX family. Not detected in any normal or tumor tissues.

In terms of biological role, could act as a modulator of transcription. The chain is Putative protein SSX9 from Homo sapiens (Human).